The following is a 344-amino-acid chain: Succinylglutamate desuccinylase (344 aa).

Histidine 63, glutamate 66, and histidine 160 together coordinate Zn(2+). Glutamate 224 is a catalytic residue.

The protein belongs to the AspA/AstE family. Succinylglutamate desuccinylase subfamily. The cofactor is Zn(2+).

The enzyme catalyses N-succinyl-L-glutamate + H2O = L-glutamate + succinate. It participates in amino-acid degradation; L-arginine degradation via AST pathway; L-glutamate and succinate from L-arginine: step 5/5. Functionally, transforms N(2)-succinylglutamate into succinate and glutamate. The polypeptide is Succinylglutamate desuccinylase (Shewanella putrefaciens (strain CN-32 / ATCC BAA-453)).